The primary structure comprises 2467 residues: Transcription factor TFIIIB component B'' homolog (2467 aa).

2 disordered regions span residues 1–145 (MFRR…RYRI) and 159–243 (LRKE…VDDG). The interaction with ZBTB43 stretch occupies residues 1 to 301 (MFRRARLSVK…TYSSFRKNYY (301 aa)). The span at 81 to 92 (AAESSTLSSASS) shows a compositional bias: low complexity. Over residues 99–118 (SSTSSLVQPSGSAPSQSRPL) the composition is skewed to polar residues. Composition is skewed to basic and acidic residues over residues 133–144 (AKEKQPCSDRYR) and 177–186 (RPPDRSKMTM). The stretch at 144–177 (RIYKARKLREMLKEELRKEKKQWKNKFSTNESQR) forms a coiled coil. A compositionally biased stretch (acidic residues) spans 231 to 242 (NDNEDVEEEVDD). In terms of domain architecture, Myb-like spans 297 to 347 (RKNYYSKPWSNKETDMFFLAISMVGTDFSMIGQLFPHRARIEIKNKFKREE). Residues 357–472 (AFQEKRPFDF…QEKKRRRNQG (116 aa)) form a required for phosphorylation by CSNK2A1 region. Disordered regions lie at residues 380–513 (EEKR…ECNK), 576–720 (SADM…VKAA), 748–844 (PPQT…PATW), 866–893 (LTATASTKDSESDVKDSGRNDTASNAEM), 971–1200 (LQEN…SSKI), 1231–1270 (LGRHETDQGMPLPDALERFSDTNLSKPLPQEQQPLQVKPA), 1318–1388 (DSDQ…LVPI), 1409–1448 (LPVRGRLQRPRPNVQKARQRQIVEKGEARDIAKNEGPELQ), 1527–1561 (KAKPNLGGARRKDEQPGVEKGRTDESTALTAEDHL), 1592–1706 (IHSE…RASK), 1902–1926 (IVSKEQSNRDAAVEEEAVEETLPTR), 1977–2014 (IQRETEGDDSKAVELEDKSHAPVTAAETKEEEQSQCVG), 2058–2083 (LDSGQSFGESAAKEALKETPKGSDVP), 2179–2206 (LVVQDAPSLSPSRSGSSEKPPANLDLTS), 2260–2290 (GIFPTSESTHATSKPQKEHSEPTDTGSSGSL), and 2304–2449 (LPQS…EEVT). Residues 458–487 (EQDQNQEKKRRRNQGEANKQEATNLLERVL) are a coiled coil. The span at 649–660 (AAEKNHMEKETM) shows a compositional bias: basic and acidic residues. Residues 809 to 824 (RFQKPKPNTGRRRRRI) show a composition bias toward basic residues. Composition is skewed to basic and acidic residues over residues 873-884 (KDSESDVKDSGR), 992-1002 (TGKDLAMKEST), 1009-1041 (TEEREAYSEETERQEKISALIKDAEEAKARGEM), 1089-1098 (EGKELNLRET), 1112-1130 (EKTDIEETNGDPKETERES), and 1150-1170 (DLGKPEKIDVAPREREPEEHS). Composition is skewed to polar residues over residues 1180–1200 (LSSSDGSTGSPQDKVNISSKI), 1251–1265 (DTNLSKPLPQEQQPL), 1318–1330 (DSDQAALSPQHNV), and 1364–1382 (PPNSSEPKEGSQLTPNQEN). Composition is skewed to basic and acidic residues over residues 1429–1448 (QIVEKGEARDIAKNEGPELQ), 1536–1561 (RRKDEQPGVEKGRTDESTALTAEDHL), and 1592–1603 (IHSEESGSDRND). Composition is skewed to polar residues over residues 1621–1642 (EQPTSLGLEEQSLSKQIRSSCP) and 1650–1665 (YPKTVSSRRTPLSSAS). Over residues 1688–1697 (RGSKRIRGKT) the composition is skewed to basic residues. Composition is skewed to basic and acidic residues over residues 1902–1913 (IVSKEQSNRDAA), 1977–1996 (IQRETEGDDSKAVELEDKSH), and 2068–2078 (AAKEALKETPK). A compositionally biased stretch (low complexity) spans 2185–2199 (PSLSPSRSGSSEKPP). 3 stretches are compositionally biased toward polar residues: residues 2262–2273 (FPTSESTHATSK), 2319–2334 (PASNSEQRDIVTSSSK), and 2414–2429 (TAGSPESSAAQVSSDQ).

As to quaternary structure, component of TFIIIB complex. The TFIIIB complex has two activities, alpha and beta. The TFIIIB-alpha and TFIIIB-beta activities are required for transcription of genes with TFIIIC-bound internal promoters and PSE transcription factor-bound external promoters, respectively. The TFIIIB-alpha activity complex is composed of TBP, BDP1, and a complex containing both BRF2 and at least four stably associated proteins; YY1 facilitates the formation of TFIIIB-alpha activity complex. The TFIIIB-beta activity complex is composed of TBP, BDP1, and BRF1. Interacts with BRF1; this interaction diminishes during mitosis resulting in the release of BDP1 from chromosomal templates. Component of TFIIIC complex. The TFIIIC complex has two activities, C1 and C2. The TFIIIC2 activity complex is only required for transcription of the 'classical' pol III genes whereas the TFIIIC1 activity complex is required for transcription of all pol III genes. The TFIIIC1 activity complex is composed at least of BDP1. Interacts with ZBTB43. Post-translationally, phosphorylated by CSNK2A1 during mitosis, resulting in its release from chromatin and suppression of polymerase III transcription. In terms of tissue distribution, expressed in the cochlea, particularly in the spiral ligament, the capillaries of the stria vascularis and the basilar membrane.

Its subcellular location is the nucleus. General activator of RNA polymerase III transcription. Requires for transcription from all three types of polymerase III promoters. Requires for transcription of genes with internal promoter elements and with promoter elements upstream of the initiation site. The protein is Transcription factor TFIIIB component B'' homolog (Bdp1) of Mus musculus (Mouse).